The following is a 632-amino-acid chain: Phosphatidylinositol 3,4,5-trisphosphate 3-phosphatase and protein-tyrosine-phosphatase PTEN2B (632 aa).

The segment covering 1-12 (METDPANSSSKS) has biased composition (polar residues). A disordered region spans residues 1 to 98 (METDPANSSS…RESPPSIFSS (98 aa)). Over residues 39–48 (SAEREAHEDS) the composition is skewed to basic and acidic residues. Over residues 63-73 (MPASSTGSEPL) the composition is skewed to polar residues. Over residues 87 to 98 (SPRESPPSIFSS) the composition is skewed to low complexity. A Phosphatase tensin-type domain is found at 189-368 (RRYQEGEFDL…KYYERVQNQF (180 aa)). C307 (phosphocysteine intermediate) is an active-site residue. The C2 tensin-type domain maps to 375-502 (ERRCMLRGFR…FHVEIVMIEP (128 aa)). The interval 504–603 (NSQPTKSKSD…SGHYNPIPNN (100 aa)) is disordered. The segment covering 505-527 (SQPTKSKSDSTQQQSQSSSSADS) has biased composition (low complexity). The segment covering 535-549 (KDDDVFSDSDGEEEG) has biased composition (acidic residues). A Phosphoserine modification is found at S541. Residues 550–571 (NSQSYSTNEKTASSMHTTSKPH) are compositionally biased toward polar residues. Positions 584 to 594 (ANRSVTSSSSS) are enriched in low complexity.

The protein belongs to the PTEN phosphatase protein family. In terms of tissue distribution, expressed, at low levels, in seedlings, roots, stems, leaves, flowers and siliques. However, at protein level, not observed in older leaves, flowers and siliques.

The enzyme catalyses O-phospho-L-tyrosyl-[protein] + H2O = L-tyrosyl-[protein] + phosphate. The catalysed reaction is a 1,2-diacyl-sn-glycero-3-phospho-(1D-myo-inositol-3,4,5-trisphosphate) + H2O = a 1,2-diacyl-sn-glycero-3-phospho-(1D-myo-inositol-4,5-bisphosphate) + phosphate. Its function is as follows. Protein tyrosine phosphatase that also exhibits a weak lipid phosphatase activity towards PtdIns(3)P. The protein is Phosphatidylinositol 3,4,5-trisphosphate 3-phosphatase and protein-tyrosine-phosphatase PTEN2B of Arabidopsis thaliana (Mouse-ear cress).